We begin with the raw amino-acid sequence, 394 residues long: Phosphoglycerate kinase (394 aa).

Substrate contacts are provided by residues 21–23 (DLN), R36, 60–63 (HLGN), R114, and R147. ATP-binding positions include K198, E315, and 341–344 (GGET).

Belongs to the phosphoglycerate kinase family. In terms of assembly, monomer.

It is found in the cytoplasm. It catalyses the reaction (2R)-3-phosphoglycerate + ATP = (2R)-3-phospho-glyceroyl phosphate + ADP. The protein operates within carbohydrate degradation; glycolysis; pyruvate from D-glyceraldehyde 3-phosphate: step 2/5. The sequence is that of Phosphoglycerate kinase from Wigglesworthia glossinidia brevipalpis.